We begin with the raw amino-acid sequence, 64 residues long: MSKIKSHSGAAKRFKRTANGFKHKQSHTSHILTKKSTKRKRHLRSMNQIAQSDKALIVRMLPYI.

Basic residues predominate over residues 1 to 44; sequence MSKIKSHSGAAKRFKRTANGFKHKQSHTSHILTKKSTKRKRHLR. Residues 1–48 are disordered; that stretch reads MSKIKSHSGAAKRFKRTANGFKHKQSHTSHILTKKSTKRKRHLRSMNQ.

This sequence belongs to the bacterial ribosomal protein bL35 family.

The protein is Large ribosomal subunit protein bL35 of Marinomonas sp. (strain MWYL1).